Consider the following 121-residue polypeptide: Cytochrome B5-like protein (121 aa).

Residues 1-21 (MIAVIGLLLGFLVSALFLIQG) traverse the membrane as a helical segment. The tract at residues 24–49 (RRTNDNQEKKRSSSEPVEDVVRPKSY) is disordered. Residues 26 to 36 (TNDNQEKKRSS) show a composition bias toward basic and acidic residues. The 76-residue stretch at 46-121 (PKSYSKSEVA…IEDFYIGELH (76 aa)) folds into the Cytochrome b5 heme-binding domain. Residues His-81 and His-104 each coordinate heme.

It belongs to the cytochrome b5 family.

The protein resides in the membrane. This chain is Cytochrome B5-like protein, found in Arabidopsis thaliana (Mouse-ear cress).